The primary structure comprises 283 residues: Polyamine aminopropyltransferase (283 aa).

The PABS domain maps to 3 to 236 (GIWFSELQTP…GLWAFSLGSK (234 aa)). Q32 is a binding site for S-methyl-5'-thioadenosine. 2 residues coordinate spermidine: H63 and D87. S-methyl-5'-thioadenosine is bound by residues E107 and 138 to 139 (DG). D156 functions as the Proton acceptor in the catalytic mechanism. A spermidine-binding site is contributed by 156-159 (DSTD). P163 is an S-methyl-5'-thioadenosine binding site.

It belongs to the spermidine/spermine synthase family. Homodimer or homotetramer.

Its subcellular location is the cytoplasm. The enzyme catalyses S-adenosyl 3-(methylsulfanyl)propylamine + putrescine = S-methyl-5'-thioadenosine + spermidine + H(+). The protein operates within amine and polyamine biosynthesis; spermidine biosynthesis; spermidine from putrescine: step 1/1. Its function is as follows. Catalyzes the irreversible transfer of a propylamine group from the amino donor S-adenosylmethioninamine (decarboxy-AdoMet) to putrescine (1,4-diaminobutane) to yield spermidine. The protein is Polyamine aminopropyltransferase of Moorella thermoacetica (strain ATCC 39073 / JCM 9320).